Here is a 288-residue protein sequence, read N- to C-terminus: Protease HtpX (288 aa).

A run of 2 helical transmembrane segments spans residues 4–24 and 33–53; these read ILLF…ILTL and VGLL…SLLM. Residue H139 coordinates Zn(2+). E140 is a catalytic residue. A Zn(2+)-binding site is contributed by H143. 2 helical membrane-spanning segments follow: residues 146-166 and 186-206; these read SGDM…VIFI and IYFM…SMIA. E214 provides a ligand contact to Zn(2+).

The protein belongs to the peptidase M48B family. Requires Zn(2+) as cofactor.

It is found in the cell inner membrane. The polypeptide is Protease HtpX (Histophilus somni (strain 2336) (Haemophilus somnus)).